Consider the following 176-residue polypeptide: Lipoprotein signal peptidase (176 aa).

4 helical membrane-spanning segments follow: residues 10 to 30 (LFQF…AIVL), 48 to 68 (VPVL…AFSF), 78 to 98 (YFFT…LLRM), and 102 to 122 (MVVL…NLID). Catalysis depends on residues Asp-131 and Asp-149. Residues 141 to 161 (HFPAFNIADSAITLGTILLLI) traverse the membrane as a helical segment.

This sequence belongs to the peptidase A8 family.

The protein resides in the cell inner membrane. It catalyses the reaction Release of signal peptides from bacterial membrane prolipoproteins. Hydrolyzes -Xaa-Yaa-Zaa-|-(S,diacylglyceryl)Cys-, in which Xaa is hydrophobic (preferably Leu), and Yaa (Ala or Ser) and Zaa (Gly or Ala) have small, neutral side chains.. Its pathway is protein modification; lipoprotein biosynthesis (signal peptide cleavage). In terms of biological role, this protein specifically catalyzes the removal of signal peptides from prolipoproteins. In Acinetobacter baumannii (strain ATCC 17978 / DSM 105126 / CIP 53.77 / LMG 1025 / NCDC KC755 / 5377), this protein is Lipoprotein signal peptidase.